The chain runs to 101 residues: ATP-dependent Clp protease adapter protein ClpS 2 (101 aa).

This sequence belongs to the ClpS family. Binds to the N-terminal domain of the chaperone ClpA.

In terms of biological role, involved in the modulation of the specificity of the ClpAP-mediated ATP-dependent protein degradation. The chain is ATP-dependent Clp protease adapter protein ClpS 2 from Rhizobium meliloti (strain 1021) (Ensifer meliloti).